A 596-amino-acid polypeptide reads, in one-letter code: Aspartate--tRNA(Asp/Asn) ligase (596 aa).

Glu-175 serves as a coordination point for L-aspartate. The segment at 199 to 202 (QQYK) is aspartate. The L-aspartate site is built by Arg-221 and His-454. 221 to 223 (RDE) contacts ATP. Glu-488 contacts ATP. An L-aspartate-binding site is contributed by Arg-495. Position 540–543 (540–543 (GIDR)) interacts with ATP.

The protein belongs to the class-II aminoacyl-tRNA synthetase family. Type 1 subfamily. Homodimer.

It localises to the cytoplasm. It catalyses the reaction tRNA(Asx) + L-aspartate + ATP = L-aspartyl-tRNA(Asx) + AMP + diphosphate. Aspartyl-tRNA synthetase with relaxed tRNA specificity since it is able to aspartylate not only its cognate tRNA(Asp) but also tRNA(Asn). Reaction proceeds in two steps: L-aspartate is first activated by ATP to form Asp-AMP and then transferred to the acceptor end of tRNA(Asp/Asn). The sequence is that of Aspartate--tRNA(Asp/Asn) ligase from Rhizobium leguminosarum bv. trifolii (strain WSM2304).